The chain runs to 318 residues: Probable dual-specificity RNA methyltransferase RlmN (318 aa).

Glu63 acts as the Proton acceptor in catalysis. Residues 69-299 (HDYGRTVCVS…VSLRRELGAD (231 aa)) form the Radical SAM core domain. The cysteines at positions 76 and 304 are disulfide-linked. Cys83, Cys87, and Cys90 together coordinate [4Fe-4S] cluster. S-adenosyl-L-methionine-binding positions include 130–131 (GE), Ser162, 185–187 (SLH), and Asn261. Cys304 serves as the catalytic S-methylcysteine intermediate.

It belongs to the radical SAM superfamily. RlmN family. [4Fe-4S] cluster serves as cofactor.

It is found in the cytoplasm. The enzyme catalyses adenosine(2503) in 23S rRNA + 2 reduced [2Fe-2S]-[ferredoxin] + 2 S-adenosyl-L-methionine = 2-methyladenosine(2503) in 23S rRNA + 5'-deoxyadenosine + L-methionine + 2 oxidized [2Fe-2S]-[ferredoxin] + S-adenosyl-L-homocysteine. It carries out the reaction adenosine(37) in tRNA + 2 reduced [2Fe-2S]-[ferredoxin] + 2 S-adenosyl-L-methionine = 2-methyladenosine(37) in tRNA + 5'-deoxyadenosine + L-methionine + 2 oxidized [2Fe-2S]-[ferredoxin] + S-adenosyl-L-homocysteine. Its function is as follows. Specifically methylates position 2 of adenine 2503 in 23S rRNA and position 2 of adenine 37 in tRNAs. This Desulforudis audaxviator (strain MP104C) protein is Probable dual-specificity RNA methyltransferase RlmN.